A 773-amino-acid polypeptide reads, in one-letter code: MRRLRRWAIAALLLLPLLPPPGLGALGPRGALHWRSSAHVGSPESPEGSEVTEPSRLVRQSSGGEVRKPQLDTRVRQDPPRGTPVHLAQVSFVIPAFDSNFTLDLELNHHLLSSQYVERHFSREGTRQHSTGAGDHCYYHGKLRGNPQSFAALSTCQGLHGVFSDGNLTYIVEPKEIAGPWGPPQGPLPHLIYRTPLLPAPLGCREPGCLFAVPAQSALPNWPKLRRKRQVRRGHPTVHSETKYVELIVINDHQLFEQMRQSVVLTSNFAKSVVNLADVIYKEQLNTRIVLVAMETWADGDKIQVQDDLLETLARLMVYRREGLPEPSDATHLFSGRTFQSTSSGAAYVGGICSLSRGGGVNEYGNMGAMAVTLAQTLGQNLGMMWNKHRSSAGDCKCPDIWLGCIMEDTGFYLPRKFSRCSIDEYNQFLQEGGGSCLFNKPLKLLDPPECGNGFVEAGEECDCGSVQECSRAGGNCCKKCTLTHDAMCSDGLCCRRCKYEPRGVSCREAVNECDIAETCTGDSSQCPPNLHKLDGYYCDHEQGRCYGGRCKTRDRQCQALWGHAAADRFCYEKLNVEGTERGNCGRKGSGWVQCSKQDVLCGFLLCVNISGAPRLGDLGGDISSVTFYHQGKELDCRGGHVQLADGSDLSYVEDGTACGPNMLCLDHRCLPASAFNFSTCPGSGERRICSHHGVCSNEGKCICQPDWTGKDCSIHNPLPTSPPTGETERYKGPSGTNIIIGSIAGAVLVAAIVLGGTGWGFKNIRRGRSGGA.

The N-terminal stretch at 1 to 24 (MRRLRRWAIAALLLLPLLPPPGLG) is a signal peptide. Positions 25–229 (ALGPRGALHW…PNWPKLRRKR (205 aa)) are excised as a propeptide. Positions 36–82 (SSAHVGSPESPEGSEVTEPSRLVRQSSGGEVRKPQLDTRVRQDPPRG) are disordered. Basic and acidic residues predominate over residues 65 to 79 (EVRKPQLDTRVRQDP). 2 N-linked (GlcNAc...) asparagine glycosylation sites follow: asparagine 100 and asparagine 167. Over 230 to 738 (QVRRGHPTVH…ERYKGPSGTN (509 aa)) the chain is Extracellular. In terms of domain architecture, Peptidase M12B spans 243 to 442 (KYVELIVIND…GGGSCLFNKP (200 aa)). A required for localization to cerebellar cortex basket cell terminals. Also required for localization of KCNA1, KCNA2, DLG4 and ADAM22 to cerebellar cortex basket cell terminal perisomatic axons and pinceaux region spans residues 336–773 (GRTFQSTSSG…NIRRGRSGGA (438 aa)). 4 cysteine pairs are disulfide-bonded: cysteine 353/cysteine 437, cysteine 396/cysteine 421, cysteine 398/cysteine 405, and cysteine 507/cysteine 527. The region spanning 448 to 535 (PPECGNGFVE…QCPPNLHKLD (88 aa)) is the Disintegrin domain. Residues asparagine 609 and asparagine 677 are each glycosylated (N-linked (GlcNAc...) asparagine). 3 disulfide bridges follow: cysteine 681-cysteine 696, cysteine 690-cysteine 702, and cysteine 704-cysteine 713. One can recognise an EGF-like domain in the interval 681–713 (CPGSGERRICSHHGVCSNEGKCICQPDWTGKDC). The chain crosses the membrane as a helical span at residues 739 to 759 (IIIGSIAGAVLVAAIVLGGTG). Topologically, residues 760-773 (WGFKNIRRGRSGGA) are cytoplasmic.

As to quaternary structure, interacts with LGI1 and LGI4. Interacts with KCNA1/KV1.1, KCNA2/KV1.2, DLG4/PSD-95 and ADAM22. In terms of processing, the precursor is cleaved by a furin endopeptidase. As to expression, abundantly expressed in cerebellar cortex basket cell terminals and pinceaux, weakly expressed in Purkinje cells (at protein level). Weakly expressed in the heart. Abundantly in expressed in neurons throughout the central nervous system including the telencephalon, diencephalic and brainstem nuclei, cerebellum and spinal cord. Expressed in the peripheral nervous system trigeminal and dorsal root ganglia. Expressed in the ganglion and bipolar cells of the retinae and weakly in the cornea of the eyes. Expressed in the hepatocytes of the parenchyma and hepatic lobules of the liver. Expressed in distinct focal areas in the juxtamedullary cortex of the kidney. Expressed in spermatocytes in the seminiferous tubules of the testes. Expressed in the stratum spinosum of the stratified squamous epithelia of the tongue and esophagus.

The protein localises to the presynaptic cell membrane. Its subcellular location is the perikaryon. It localises to the cell projection. It is found in the axon. Probable ligand for integrin in the brain. This is a non catalytic metalloprotease-like protein. Required for localization of the potassium channel subunit proteins KCNA1/KV1.1 and KCNA2/KV1.2 at cerebellar cortex basket cell distal terminals, is thereby involved in ephaptic inhibitory synchronization of Purkinje cell firing and response to stress. Plays a role in spatial learning and motor coordination. Involved in the nociceptive pain response to chemical-derived stimulation. The chain is Disintegrin and metalloproteinase domain-containing protein 11 (Adam11) from Mus musculus (Mouse).